Consider the following 227-residue polypeptide: Mitochondrial cardiolipin hydrolase (227 aa).

Over 1–14 the chain is Mitochondrial intermembrane; sequence MDVFKQMSFKELMK. Residues 15-33 form a helical membrane-spanning segment; sequence VLGLGTVAFVLGVEWLNWL. Over 34 to 227 the chain is Cytoplasmic; it reads TRRLRDSRGP…LQSKNGQIKK (194 aa). A PLD phosphodiesterase domain is found at 153–180; sequence SAVHMHHKFALVDGRKLISGSLNWTLTA. Catalysis depends on residues His158, Lys160, and Asp165.

It belongs to the phospholipase D family. MitoPLD/Zucchini subfamily. As to quaternary structure, homodimer.

It localises to the mitochondrion outer membrane. It carries out the reaction a cardiolipin + H2O = a 1,2-diacyl-sn-glycero-3-phospho-(1'-sn-glycerol) + a 1,2-diacyl-sn-glycero-3-phosphate + H(+). In terms of biological role, presents phospholipase and nuclease activities, depending on the different physiological conditions. Plays a key role in mitochondrial fusion and fission via its phospholipase activity. In its phospholipase role, it uses the mitochondrial lipid cardiolipin as substrate to generate phosphatidate (PA or 1,2-diacyl-sn-glycero-3-phosphate), a second messenger signaling lipid. Production of PA facilitates Mitofusin-mediated fusion, whereas the cleavage of PA by the Lipin family of phosphatases produces diacylgycerol (DAG) which promotes mitochondrial fission. Regulates mitochondrial shape through facilitating mitochondrial fusion. During spermatogenesis, plays a critical role in PIWI-interacting RNA (piRNA) biogenesis. piRNAs provide essential protection against the activity of mobile genetic elements. piRNA-mediated transposon silencing is thus critical for maintaining genome stability, in particular in germline cells when transposons are mobilized as a consequence of wide-spread genomic demethylation. Has been shown to be a backbone-non-specific, single strand-specific nuclease, cleaving either RNA or DNA substrates with similar affinity. Produces 5' phosphate and 3' hydroxyl termini, suggesting it could directly participate in the processing of primary piRNA transcripts. Has been proposed to act as a cardiolipin hydrolase to generate phosphatidic acid at mitochondrial surface. Although it cannot be excluded that it can act as a phospholipase in some circumstances, this activity could not be confirmed. The chain is Mitochondrial cardiolipin hydrolase (pld6) from Danio rerio (Zebrafish).